The following is a 419-amino-acid chain: Phospho-N-acetylmuramoyl-pentapeptide-transferase (419 aa).

Transmembrane regions (helical) follow at residues 22 to 42 (YVSF…TAIG), 72 to 92 (TPTM…LLCA), 94 to 114 (LNNI…ALGF), 135 to 155 (IVGQ…SPDV), 210 to 230 (AAWL…SNGA), 238 to 258 (GLAA…AYMS), 266 to 286 (FLNI…AAFI), 303 to 323 (FMGD…AIII), 327 to 347 (LLIP…MLQV), and 396 to 416 (KIVV…IVTL).

It belongs to the glycosyltransferase 4 family. MraY subfamily. It depends on Mg(2+) as a cofactor.

It localises to the cell inner membrane. It carries out the reaction UDP-N-acetyl-alpha-D-muramoyl-L-alanyl-gamma-D-glutamyl-meso-2,6-diaminopimeloyl-D-alanyl-D-alanine + di-trans,octa-cis-undecaprenyl phosphate = di-trans,octa-cis-undecaprenyl diphospho-N-acetyl-alpha-D-muramoyl-L-alanyl-D-glutamyl-meso-2,6-diaminopimeloyl-D-alanyl-D-alanine + UMP. The protein operates within cell wall biogenesis; peptidoglycan biosynthesis. Functionally, catalyzes the initial step of the lipid cycle reactions in the biosynthesis of the cell wall peptidoglycan: transfers peptidoglycan precursor phospho-MurNAc-pentapeptide from UDP-MurNAc-pentapeptide onto the lipid carrier undecaprenyl phosphate, yielding undecaprenyl-pyrophosphoryl-MurNAc-pentapeptide, known as lipid I. This Parabacteroides distasonis (strain ATCC 8503 / DSM 20701 / CIP 104284 / JCM 5825 / NCTC 11152) protein is Phospho-N-acetylmuramoyl-pentapeptide-transferase.